Reading from the N-terminus, the 113-residue chain is U11-theraphotoxin-Hhn1a (113 aa).

An N-terminal signal peptide occupies residues 1 to 21; sequence MNTVRVTFLLVFVLAVSLGQA. The propeptide occupies 22–74; sequence DKDENRMEMQEKTEQGKSYLDFAENLLLQKLEELEAKLPEEDSEESRNSRQKR. A compositionally biased stretch (basic and acidic residues) spans 58–69; that stretch reads KLPEEDSEESRN. Positions 58–82 are disordered; the sequence is KLPEEDSEESRNSRQKRCIGEGVPC. 3 cysteine pairs are disulfide-bonded: cysteine 75-cysteine 90, cysteine 82-cysteine 95, and cysteine 89-cysteine 110.

This sequence belongs to the neurotoxin 14 (magi-1) family. 01 (HNTX-16) subfamily. As to expression, expressed by the venom gland.

The protein localises to the secreted. Functionally, probable ion channel inhibitor. In Cyriopagopus hainanus (Chinese bird spider), this protein is U11-theraphotoxin-Hhn1a.